The primary structure comprises 449 residues: GTPase Der (449 aa).

EngA-type G domains are found at residues 2–169 (FTVA…QLPP) and 180–355 (VRFC…EQLT). GTP contacts are provided by residues 8 to 15 (GRPNVGKS), 55 to 59 (DTGGL), 118 to 121 (NKSE), 186 to 193 (GKPNVGKS), 233 to 237 (DTAGI), and 298 to 301 (NKWD). One can recognise a KH-like domain in the interval 356–440 (KKISTSLLND…PITLYFKSKN (85 aa)).

Belongs to the TRAFAC class TrmE-Era-EngA-EngB-Septin-like GTPase superfamily. EngA (Der) GTPase family. As to quaternary structure, associates with the 50S ribosomal subunit.

Its function is as follows. GTPase that plays an essential role in the late steps of ribosome biogenesis. The polypeptide is GTPase Der (Mycoplasma pneumoniae (strain ATCC 29342 / M129 / Subtype 1) (Mycoplasmoides pneumoniae)).